The sequence spans 298 residues: 4-hydroxy-tetrahydrodipicolinate synthase (298 aa).

Thr48 serves as a coordination point for pyruvate. The active-site Proton donor/acceptor is the Tyr137. Lys166 functions as the Schiff-base intermediate with substrate in the catalytic mechanism. Position 207 (Ile207) interacts with pyruvate.

Belongs to the DapA family. Homotetramer; dimer of dimers.

It localises to the cytoplasm. It catalyses the reaction L-aspartate 4-semialdehyde + pyruvate = (2S,4S)-4-hydroxy-2,3,4,5-tetrahydrodipicolinate + H2O + H(+). It participates in amino-acid biosynthesis; L-lysine biosynthesis via DAP pathway; (S)-tetrahydrodipicolinate from L-aspartate: step 3/4. Its function is as follows. Catalyzes the condensation of (S)-aspartate-beta-semialdehyde [(S)-ASA] and pyruvate to 4-hydroxy-tetrahydrodipicolinate (HTPA). The chain is 4-hydroxy-tetrahydrodipicolinate synthase from Campylobacter jejuni subsp. jejuni serotype O:2 (strain ATCC 700819 / NCTC 11168).